The chain runs to 367 residues: Cytochrome-c peroxidase IdrP2 (367 aa).

The first 28 residues, 1 to 28 (MTTHQSIRRLSRIAALVGLAFVAGTVAA), serve as a signal peptide directing secretion. Cytochrome c domains follow at residues 47–157 (DMVE…AMWQ) and 200–345 (SQQK…EALS). Heme c is bound by residues C69, C72, H73, C215, C218, and H219.

The iodate reductase (Idr) complex is composed of a molybdopterin-dependent iodate reductase (IdrA and IdrB subunits) and two associated peroxidases (IdrP1 and IdrP2). Heme c serves as cofactor.

It localises to the periplasm. The enzyme catalyses 2 Fe(II)-[cytochrome c] + H2O2 + 2 H(+) = 2 Fe(III)-[cytochrome c] + 2 H2O. In terms of biological role, involved in iodate respiration. May play a critical role in detoxification of inadvertent H(2)O(2) generated by the iodate reductase IdrA/IdrB. The protein is Cytochrome-c peroxidase IdrP2 of Denitromonas iodatirespirans.